A 548-amino-acid polypeptide reads, in one-letter code: Biotin-dependent acetyl-/propionyl-coenzyme A carboxylase beta5 subunit (548 aa).

Residues 1–23 form a disordered region; it reads MTSVTDRSAHSAERSTEHTIDIH. Over residues 7 to 21 the composition is skewed to basic and acidic residues; that stretch reads RSAHSAERSTEHTID. Positions 25 to 281 constitute a CoA carboxyltransferase N-terminal domain; it reads TAGKLAELHK…NNSTDAPRYQ (257 aa). The 247-residue stretch at 295 to 541 folds into the CoA carboxyltransferase C-terminal domain; sequence DEDLELDTLI…ERKIAQLPPK (247 aa).

This sequence belongs to the AccD/PCCB family. In terms of assembly, the biotin-dependent acyl-CoA carboxylase complex is composed of AccA3, which contains the biotin carboxylase (BC) and biotin carboxyl carrier protein (BCCP) domains, and AccD5, which contains the carboxyl transferase (CT) domain.

The catalysed reaction is N(6)-carboxybiotinyl-L-lysyl-[protein] + acetyl-CoA = N(6)-biotinyl-L-lysyl-[protein] + malonyl-CoA. It catalyses the reaction N(6)-carboxybiotinyl-L-lysyl-[protein] + propanoyl-CoA = methylmalonyl-CoA + N(6)-biotinyl-L-lysyl-[protein]. Its pathway is lipid metabolism; mycolic acid biosynthesis. Component of a biotin-dependent acyl-CoA carboxylase complex. This subunit transfers the CO2 from carboxybiotin to the CoA ester substrate. When associated with the alpha3 subunit AccA3, is involved in the carboxylation of acetyl-CoA and propionyl-CoA. This Mycobacterium tuberculosis (strain CDC 1551 / Oshkosh) protein is Biotin-dependent acetyl-/propionyl-coenzyme A carboxylase beta5 subunit (accD5).